Here is a 368-residue protein sequence, read N- to C-terminus: Protein HGH1 homolog (368 aa).

This sequence belongs to the HGH1 family.

This chain is Protein HGH1 homolog, found in Drosophila pseudoobscura pseudoobscura (Fruit fly).